A 364-amino-acid polypeptide reads, in one-letter code: Anhydro-N-acetylmuramic acid kinase (364 aa).

11 to 18 (GSSLDGID) lines the ATP pocket.

The protein belongs to the anhydro-N-acetylmuramic acid kinase family.

It catalyses the reaction 1,6-anhydro-N-acetyl-beta-muramate + ATP + H2O = N-acetyl-D-muramate 6-phosphate + ADP + H(+). Its pathway is amino-sugar metabolism; 1,6-anhydro-N-acetylmuramate degradation. It participates in cell wall biogenesis; peptidoglycan recycling. In terms of biological role, catalyzes the specific phosphorylation of 1,6-anhydro-N-acetylmuramic acid (anhMurNAc) with the simultaneous cleavage of the 1,6-anhydro ring, generating MurNAc-6-P. Is required for the utilization of anhMurNAc either imported from the medium or derived from its own cell wall murein, and thus plays a role in cell wall recycling. The polypeptide is Anhydro-N-acetylmuramic acid kinase (Pseudomonas syringae pv. syringae (strain B728a)).